A 353-amino-acid chain; its full sequence is Photosystem II D2 protein (353 aa).

T2 is modified (N-acetylthreonine). The residue at position 2 (T2) is a Phosphothreonine. The helical transmembrane segment at 41–61 (CAYFALGGWFTGTTFVTSWYT) threads the bilayer. A chlorophyll a-binding site is contributed by H118. Residues 125 to 141 (GFMLRQFELARSVQLRP) form a helical membrane-spanning segment. Pheophytin a is bound by residues Q130 and N143. The helical transmembrane segment at 153–166 (VFVSVFLIYPLGQS) threads the bilayer. A chlorophyll a-binding site is contributed by H198. A helical membrane pass occupies residues 208 to 228 (AALLCAIHGATVENTLFEDGD). Positions 215 and 262 each coordinate a plastoquinone. H215 is a Fe cation binding site. Residue H269 coordinates Fe cation. The chain crosses the membrane as a helical span at residues 279–295 (GLWMSAIGVVGLALNLR).

This sequence belongs to the reaction center PufL/M/PsbA/D family. In terms of assembly, PSII is composed of 1 copy each of membrane proteins PsbA, PsbB, PsbC, PsbD, PsbE, PsbF, PsbH, PsbI, PsbJ, PsbK, PsbL, PsbM, PsbT, PsbX, PsbY, PsbZ, Psb30/Ycf12, at least 3 peripheral proteins of the oxygen-evolving complex and a large number of cofactors. It forms dimeric complexes. The D1/D2 heterodimer binds P680, chlorophylls that are the primary electron donor of PSII, and subsequent electron acceptors. It shares a non-heme iron and each subunit binds pheophytin, quinone, additional chlorophylls, carotenoids and lipids. There is also a Cl(-1) ion associated with D1 and D2, which is required for oxygen evolution. The PSII complex binds additional chlorophylls, carotenoids and specific lipids. is required as a cofactor.

Its subcellular location is the plastid. It localises to the chloroplast thylakoid membrane. It catalyses the reaction 2 a plastoquinone + 4 hnu + 2 H2O = 2 a plastoquinol + O2. In terms of biological role, photosystem II (PSII) is a light-driven water:plastoquinone oxidoreductase that uses light energy to abstract electrons from H(2)O, generating O(2) and a proton gradient subsequently used for ATP formation. It consists of a core antenna complex that captures photons, and an electron transfer chain that converts photonic excitation into a charge separation. The D1/D2 (PsbA/PsbD) reaction center heterodimer binds P680, the primary electron donor of PSII as well as several subsequent electron acceptors. D2 is needed for assembly of a stable PSII complex. This is Photosystem II D2 protein from Lolium perenne (Perennial ryegrass).